The primary structure comprises 337 residues: MKENVAEFLRRTILKIPLSEMKSILEAWDFLSEDQLQTINLKQRKDYLAQEVILLCEDKRASLDDVVLLDIVYTQFHRHQKLWNVFQMSKEPGEDVDLFDMEQFQSSFKRILQRALKNVTVSFRVYEKDSVWIRVAWGTQYSQPNQYKPTFVVYYPQTPYAFISSCHLKNTVPLLHQALKVASKHHQIVHLDLRSRHLDSLKAIVFREYNQTCENYSSTTSLQEASLSMCLDSKITHENTEEKVRVHRVTQETFGTYPQPQLEFAQYKLETKFKSNIGGGLLADRKEPFRCLVKFSSPHLLEALKSLAPAGIADAPLSPLLTCIPSKKMNYFKIRDK.

2 positions are modified to phosphoserine: S226 and S233.

This sequence belongs to the CENP-N/CHL4 family. In terms of assembly, component of the CENPA-NAC complex, at least composed of CENPA, CENPC, CENPH, CENPM, CENPN, CENPT and CENPU. The CENPA-NAC complex interacts with the CENPA-CAD complex, composed of CENPI, CENPK, CENPL, CENPO, CENPP, CENPQ, CENPR and CENPS. Interacts directly with CENPA. Identified in a centromere complex containing histones H2A, H2B and H4, and at least CENPA, CENPB, CENPC, CENPT, CENPN, HJURP, SUPT16H, SSRP1 and RSF1.

It localises to the nucleus. The protein localises to the chromosome. It is found in the centromere. The protein resides in the kinetochore. In terms of biological role, component of the CENPA-NAC (nucleosome-associated) complex, a complex that plays a central role in assembly of kinetochore proteins, mitotic progression and chromosome segregation. The CENPA-NAC complex recruits the CENPA-CAD (nucleosome distal) complex and may be involved in incorporation of newly synthesized CENPA into centromeres. CENPN is the first protein to bind specifically to CENPA nucleosomes and the direct binding of CENPA nucleosomes by CENPN is required for centromere assembly. Required for chromosome congression and efficiently align the chromosomes on a metaphase plate. In Mus musculus (Mouse), this protein is Centromere protein N (Cenpn).